An 859-amino-acid chain; its full sequence is Probable helicase A859L (859 aa).

The Helicase ATP-binding domain occupies Tyr178 to Ala349. Residue Met191–Thr198 participates in ATP binding. Residues Asp298 to His301 carry the DEAH box motif. In terms of domain architecture, Helicase C-terminal spans Gln394 to Ser553.

It belongs to the asfivirus helicase A859L family.

The protein is Probable helicase A859L of Ornithodoros (relapsing fever ticks).